The sequence spans 469 residues: Aspartyl/glutamyl-tRNA(Asn/Gln) amidotransferase subunit B (469 aa).

The protein belongs to the GatB/GatE family. GatB subfamily. As to quaternary structure, heterotrimer of A, B and C subunits.

It carries out the reaction L-glutamyl-tRNA(Gln) + L-glutamine + ATP + H2O = L-glutaminyl-tRNA(Gln) + L-glutamate + ADP + phosphate + H(+). The enzyme catalyses L-aspartyl-tRNA(Asn) + L-glutamine + ATP + H2O = L-asparaginyl-tRNA(Asn) + L-glutamate + ADP + phosphate + 2 H(+). Its function is as follows. Allows the formation of correctly charged Asn-tRNA(Asn) or Gln-tRNA(Gln) through the transamidation of misacylated Asp-tRNA(Asn) or Glu-tRNA(Gln) in organisms which lack either or both of asparaginyl-tRNA or glutaminyl-tRNA synthetases. The reaction takes place in the presence of glutamine and ATP through an activated phospho-Asp-tRNA(Asn) or phospho-Glu-tRNA(Gln). This chain is Aspartyl/glutamyl-tRNA(Asn/Gln) amidotransferase subunit B, found in Methanococcus vannielii (strain ATCC 35089 / DSM 1224 / JCM 13029 / OCM 148 / SB).